A 154-amino-acid polypeptide reads, in one-letter code: Myoglobin (154 aa).

In terms of domain architecture, Globin spans 2–148; it reads GLSDQEWQHV…FRNDMASKYK (147 aa). His65 is a nitrite binding site. His65 contributes to the O2 binding site. A heme b-binding site is contributed by His94.

In terms of assembly, monomeric.

The protein resides in the cytoplasm. It localises to the sarcoplasm. The catalysed reaction is Fe(III)-heme b-[protein] + nitric oxide + H2O = Fe(II)-heme b-[protein] + nitrite + 2 H(+). The enzyme catalyses H2O2 + AH2 = A + 2 H2O. Monomeric heme protein which primary function is to store oxygen and facilitate its diffusion within muscle tissues. Reversibly binds oxygen through a pentacoordinated heme iron and enables its timely and efficient release as needed during periods of heightened demand. Depending on the oxidative conditions of tissues and cells, and in addition to its ability to bind oxygen, it also has a nitrite reductase activity whereby it regulates the production of bioactive nitric oxide. Under stress conditions, like hypoxia and anoxia, it also protects cells against reactive oxygen species thanks to its pseudoperoxidase activity. In Dromaius novaehollandiae (Emu), this protein is Myoglobin.